A 388-amino-acid chain; its full sequence is Succinyl-diaminopimelate desuccinylase (388 aa).

A Zn(2+)-binding site is contributed by H75. The active site involves D77. D108 lines the Zn(2+) pocket. The Proton acceptor role is filled by E142. Zn(2+) contacts are provided by E143, E171, and H361.

Belongs to the peptidase M20A family. DapE subfamily. As to quaternary structure, homodimer. Zn(2+) is required as a cofactor. The cofactor is Co(2+).

It carries out the reaction N-succinyl-(2S,6S)-2,6-diaminopimelate + H2O = (2S,6S)-2,6-diaminopimelate + succinate. It functions in the pathway amino-acid biosynthesis; L-lysine biosynthesis via DAP pathway; LL-2,6-diaminopimelate from (S)-tetrahydrodipicolinate (succinylase route): step 3/3. In terms of biological role, catalyzes the hydrolysis of N-succinyl-L,L-diaminopimelic acid (SDAP), forming succinate and LL-2,6-diaminopimelate (DAP), an intermediate involved in the bacterial biosynthesis of lysine and meso-diaminopimelic acid, an essential component of bacterial cell walls. This chain is Succinyl-diaminopimelate desuccinylase, found in Methylocella silvestris (strain DSM 15510 / CIP 108128 / LMG 27833 / NCIMB 13906 / BL2).